The chain runs to 300 residues: Type II restriction enzyme HindIII (300 aa).

It carries out the reaction Endonucleolytic cleavage of DNA to give specific double-stranded fragments with terminal 5'-phosphates.. Functionally, a P subtype restriction enzyme that recognizes the double-stranded sequence 5'-AAGCTT-3' and cleaves after A-1. The polypeptide is Type II restriction enzyme HindIII (Haemophilus influenzae (strain ATCC 51907 / DSM 11121 / KW20 / Rd)).